The following is a 374-amino-acid chain: MRHLRNIFNLGIKELRSLLGDKAMLTLIVFSFTVSVYSSATVTPGSLNLAPIAIADMDQSQLSNRIVNSFYRPWFLPPEMITADEMDAGLDAGRYTFAINIPPNFQRDVLAGRQPDIQVNVDATRMSQAFTGNGYIQNIINGEVNSFVARYRDNSEPLVSLETRMRFNPNLDPAWFGGVMAIINNITMLAIVLTGSALIREREHGTVEHLLVMPITPFEIMMAKIWSMGLVVLVVSGLSLVLMVKGVLGVPIEGSIPLFMLGVALSLFATTSIGIFMGTIARSMPQLGLLVILVLLPLQMLSGGSTPRESMPQMVQDIMLTMPTTHFVSLAQAILYRGAGFEIVWPQFLTLMAIGGAFFTIALLRFRKTIGTMA.

Topologically, residues 1 to 22 (MRHLRNIFNLGIKELRSLLGDK) are cytoplasmic. A helical transmembrane segment spans residues 23–43 (AMLTLIVFSFTVSVYSSATVT). The Periplasmic segment spans residues 44–172 (PGSLNLAPIA…TRMRFNPNLD (129 aa)). Residues 133–369 (NGYIQNIING…TIALLRFRKT (237 aa)) enclose the ABC transmembrane type-2 domain. A helical transmembrane segment spans residues 173–193 (PAWFGGVMAIINNITMLAIVL). Residues 194-229 (TGSALIREREHGTVEHLLVMPITPFEIMMAKIWSMG) are Cytoplasmic-facing. Residues 230 to 250 (LVVLVVSGLSLVLMVKGVLGV) form a helical membrane-spanning segment. Topologically, residues 251–255 (PIEGS) are periplasmic. Residues 256 to 276 (IPLFMLGVALSLFATTSIGIF) form a helical membrane-spanning segment. At 277–283 (MGTIARS) the chain is on the cytoplasmic side. Residues 284-304 (MPQLGLLVILVLLPLQMLSGG) form a helical membrane-spanning segment. Topologically, residues 305-342 (STPRESMPQMVQDIMLTMPTTHFVSLAQAILYRGAGFE) are periplasmic. A helical transmembrane segment spans residues 343-363 (IVWPQFLTLMAIGGAFFTIAL). The Cytoplasmic portion of the chain corresponds to 364–374 (LRFRKTIGTMA).

This sequence belongs to the ABC-2 integral membrane protein family.

It is found in the cell inner membrane. This is Inner membrane transport permease YhhJ (yhhJ) from Escherichia coli (strain K12).